A 344-amino-acid chain; its full sequence is 3-isopropylmalate dehydrogenase (344 aa).

NAD(+) is bound at residue 74–87 (GPKWDALPRKIRPE). Substrate is bound by residues R94, R104, R132, and D217. Residues D217, D241, and D245 each contribute to the Mg(2+) site. 274–286 (GSAPDIAGKGIAN) provides a ligand contact to NAD(+).

Belongs to the isocitrate and isopropylmalate dehydrogenases family. LeuB type 1 subfamily. Homodimer. It depends on Mg(2+) as a cofactor. Mn(2+) serves as cofactor.

It localises to the cytoplasm. The catalysed reaction is (2R,3S)-3-isopropylmalate + NAD(+) = 4-methyl-2-oxopentanoate + CO2 + NADH. Its pathway is amino-acid biosynthesis; L-leucine biosynthesis; L-leucine from 3-methyl-2-oxobutanoate: step 3/4. Its function is as follows. Catalyzes the oxidation of 3-carboxy-2-hydroxy-4-methylpentanoate (3-isopropylmalate) to 3-carboxy-4-methyl-2-oxopentanoate. The product decarboxylates to 4-methyl-2 oxopentanoate. This chain is 3-isopropylmalate dehydrogenase (leuB), found in Thermus aquaticus.